Consider the following 381-residue polypeptide: Erythronate-4-phosphate dehydrogenase (381 aa).

Substrate is bound by residues serine 45 and threonine 66. NAD(+)-binding positions include aspartate 146, threonine 174, 205-207 (ASR), and aspartate 231. Residue arginine 207 is part of the active site. The active site involves glutamate 236. Histidine 253 (proton donor) is an active-site residue. NAD(+) is bound at residue glycine 256. Tyrosine 257 lines the substrate pocket.

The protein belongs to the D-isomer specific 2-hydroxyacid dehydrogenase family. PdxB subfamily. Homodimer.

The protein localises to the cytoplasm. It carries out the reaction 4-phospho-D-erythronate + NAD(+) = (R)-3-hydroxy-2-oxo-4-phosphooxybutanoate + NADH + H(+). It functions in the pathway cofactor biosynthesis; pyridoxine 5'-phosphate biosynthesis; pyridoxine 5'-phosphate from D-erythrose 4-phosphate: step 2/5. Catalyzes the oxidation of erythronate-4-phosphate to 3-hydroxy-2-oxo-4-phosphonooxybutanoate. The sequence is that of Erythronate-4-phosphate dehydrogenase from Stutzerimonas stutzeri (strain A1501) (Pseudomonas stutzeri).